Reading from the N-terminus, the 553-residue chain is Arginine--tRNA ligase (553 aa).

The 'HIGH' region signature appears at 130–140; that stretch reads ANPTGDLHIGH.

It belongs to the class-I aminoacyl-tRNA synthetase family. In terms of assembly, monomer.

Its subcellular location is the cytoplasm. It carries out the reaction tRNA(Arg) + L-arginine + ATP = L-arginyl-tRNA(Arg) + AMP + diphosphate. The sequence is that of Arginine--tRNA ligase from Staphylococcus aureus (strain MSSA476).